A 198-amino-acid polypeptide reads, in one-letter code: NAD(P)H-quinone oxidoreductase chain 6 (198 aa).

5 helical membrane passes run 9–29 (YISF…VVLL), 32–52 (IVYS…IYIL), 61–81 (AQVL…IMLV), 100–120 (TALV…ITPW), and 145–165 (LLPF…AIIL).

It belongs to the complex I subunit 6 family.

The protein resides in the membrane. It carries out the reaction a plastoquinone + NADH + (n+1) H(+)(in) = a plastoquinol + NAD(+) + n H(+)(out). It catalyses the reaction a plastoquinone + NADPH + (n+1) H(+)(in) = a plastoquinol + NADP(+) + n H(+)(out). Functionally, NDH-1 shuttles electrons from NAD(P)H, via FMN and iron-sulfur (Fe-S) centers, to quinones in the respiratory chain. The immediate electron acceptor for the enzyme in this species is believed to be plastoquinone. Couples the redox reaction to proton translocation (for every two electrons transferred, four hydrogen ions are translocated across the cytoplasmic membrane), and thus conserves the redox energy in a proton gradient. This Synechocystis sp. (strain ATCC 27184 / PCC 6803 / Kazusa) protein is NAD(P)H-quinone oxidoreductase chain 6 (ndhG).